We begin with the raw amino-acid sequence, 317 residues long: Melanocyte-stimulating hormone receptor (317 aa).

Topologically, residues 1-37 are extracellular; that stretch reads MPVQGSQRRLLGSLNSTPTATPHLGLAANQTGARCLE. Residue N29 is glycosylated (N-linked (GlcNAc...) asparagine). Residues 38-63 form a helical membrane-spanning segment; the sequence is MSIPDGLFLSLGLVSLVENVLVVTAI. Residues 64-72 lie on the Cytoplasmic side of the membrane; it reads AKNRNLHSP. Residues 73–93 traverse the membrane as a helical segment; sequence MYCFICCLALSDLLVSGSNML. Residues 94–118 lie on the Extracellular side of the membrane; the sequence is ETAVTLLLEAGALAARAAVVQQLDN. Residues 119–140 traverse the membrane as a helical segment; sequence VIDVITCSSMLSSLCFLGAIAV. Topologically, residues 141-163 are cytoplasmic; it reads DRYISIFYALRYHSIVTLPRARR. Residues 164–183 traverse the membrane as a helical segment; it reads AIAAIWVASVLCSTLFIAYY. Over 184–191 the chain is Extracellular; the sequence is DHAAVLLC. The chain crosses the membrane as a helical span at residues 192-211; the sequence is LVVFFLAMLVLMAVLYVHML. Residues 212–240 are Cytoplasmic-facing; the sequence is ARACQHAQGIARLHKRQRLAHQGFGLKGA. Residues 241–266 traverse the membrane as a helical segment; the sequence is ATLTILLGIFFLCWGPFFLHLTLIVL. Residues 267–279 lie on the Extracellular side of the membrane; it reads CPQHPTCSCIFKN. A helical membrane pass occupies residues 280–300; sequence FNLFLTLIICNAIIDPLIYAF. The Cytoplasmic segment spans residues 301–317; the sequence is RSQELRRTLKEVLLCSW. C315 carries S-palmitoyl cysteine lipidation.

Belongs to the G-protein coupled receptor 1 family. Interacts with MGRN1, but does not undergo MGRN1-mediated ubiquitination; this interaction competes with GNAS-binding and thus inhibits agonist-induced cAMP production. Interacts with OPN3; the interaction results in a decrease in MC1R-mediated cAMP signaling and ultimately a decrease in melanin production in melanocytes.

It localises to the cell membrane. Receptor for MSH (alpha, beta and gamma) and ACTH. The activity of this receptor is mediated by G proteins which activate adenylate cyclase. Mediates melanogenesis, the production of eumelanin (black/brown) and phaeomelanin (red/yellow), via regulation of cAMP signaling in melanocytes. The chain is Melanocyte-stimulating hormone receptor (MC1R) from Macaca nemestrina (Pig-tailed macaque).